Here is a 124-residue protein sequence, read N- to C-terminus: Protein TAR1 (124 aa).

A disordered region spans residues 80 to 124; that stretch reads KNRTPRHTGFSPSMTSCSKEHRQGTAPKLPSPNYNSGTEGTRFQI. A compositionally biased stretch (polar residues) spans 111–124; it reads PNYNSGTEGTRFQI.

The protein localises to the mitochondrion. In terms of biological role, may be involved in mtDNA stability or mitochondrial gene expression regulation at the post-transcriptional level. This Saccharomyces cerevisiae (strain ATCC 204508 / S288c) (Baker's yeast) protein is Protein TAR1 (TAR1).